The primary structure comprises 245 residues: Carboxymethylenebutenolidase homolog (245 aa).

At A2 the chain carries N-acetylalanine. Position 36 is an N6-acetyllysine (K36). Active-site residues include C132, D179, and H212. S223 is subject to Phosphoserine.

This sequence belongs to the dienelactone hydrolase family. As to expression, widely expressed, with highest levels in liver, followed by kidney, small intestine and colon. Present in liver and intestine (at protein level).

The protein resides in the cytoplasm. It localises to the cytosol. Strongly inhibited by p-chloromercuribenzoate (PCMB). Partially inhibited by bis-p-nitrophenylphosphate (BNPP). Not inhibited by DFP, PMSF, eserine or EDTA. Cysteine hydrolase. Can convert the prodrug olmesartan medoxomil into its pharmacologically active metabolite olmerstatan, an angiotensin receptor blocker, in liver and intestine. May also activate beta-lactam antibiotics faropenem medoxomil and lenampicillin. This is Carboxymethylenebutenolidase homolog (CMBL) from Homo sapiens (Human).